A 234-amino-acid chain; its full sequence is 3-dehydroquinate dehydratase (234 aa).

3-dehydroquinate contacts are provided by residues 33-35 and R68; that span reads EWR. Residue H124 is the Proton donor/acceptor of the active site. The active-site Schiff-base intermediate with substrate is K151. Residues R193, S214, and Q218 each contribute to the 3-dehydroquinate site.

The protein belongs to the type-I 3-dehydroquinase family. In terms of assembly, homodimer.

It catalyses the reaction 3-dehydroquinate = 3-dehydroshikimate + H2O. The protein operates within metabolic intermediate biosynthesis; chorismate biosynthesis; chorismate from D-erythrose 4-phosphate and phosphoenolpyruvate: step 3/7. Its function is as follows. Involved in the third step of the chorismate pathway, which leads to the biosynthesis of aromatic amino acids. Catalyzes the cis-dehydration of 3-dehydroquinate (DHQ) and introduces the first double bond of the aromatic ring to yield 3-dehydroshikimate. The protein is 3-dehydroquinate dehydratase of Syntrophobacter fumaroxidans (strain DSM 10017 / MPOB).